A 584-amino-acid chain; its full sequence is PE-PGRS family protein PE_PGRS11 (584 aa).

A PE domain is found at 1 to 92 (MSFVIVARDA…AATSYAVTEV (92 aa)). His-290 (tele-phosphohistidine intermediate) is an active-site residue. The active-site Proton donor/acceptor is the Glu-365. A phosphoglycerate mutase region spans residues 384–584 (YLVGPIAWTL…LPIGLPSLIP (201 aa)).

In the N-terminal section; belongs to the mycobacterial PE family. PGRS subfamily. The protein in the C-terminal section; belongs to the phosphoglycerate mutase family. Interacts with human TLR2. Mg(2+) is required as a cofactor.

The protein resides in the secreted. Its subcellular location is the cell wall. It is found in the cell surface. The enzyme catalyses (2R)-2-phosphoglycerate = (2R)-3-phosphoglycerate. Functionally, induces maturation and activation of human dendritic cells (DCs), via TLR2-dependent activation of ERK1/2, p38 MAPK, and NF-kappa-B signaling pathways, and enhances the ability of DCs to stimulate CD4(+) T cells. By activating DCs, could potentially contribute to the initiation of innate immune responses during tuberculosis infection and hence regulate the clinical course of tuberculosis. Involved in resistance to oxidative stress, via TLR2-dependent activation of the PI3K-ERK1/2-NF-kappa-B signaling pathway and expression of COX-2 and Bcl2. Also abolishes H(2)O(2)-triggered activation of p38 MAPK. The sequence is that of PE-PGRS family protein PE_PGRS11 from Mycobacterium tuberculosis (strain ATCC 25618 / H37Rv).